A 63-amino-acid polypeptide reads, in one-letter code: Large ribosomal subunit protein eL37 (63 aa).

The Zn(2+) site is built by Cys20, Cys23, Cys35, and Cys38. The C4-type zinc finger occupies 20–38 (CRRCGRRAFNVKKGYCAAC).

This sequence belongs to the eukaryotic ribosomal protein eL37 family. As to quaternary structure, part of the 50S ribosomal subunit. Zn(2+) is required as a cofactor.

Binds to the 23S rRNA. This chain is Large ribosomal subunit protein eL37, found in Thermococcus kodakarensis (strain ATCC BAA-918 / JCM 12380 / KOD1) (Pyrococcus kodakaraensis (strain KOD1)).